A 409-amino-acid polypeptide reads, in one-letter code: Potassium channel subfamily K member 3 (409 aa).

The Cytoplasmic portion of the chain corresponds to 1–8 (MKRQNVRT). Residues 9-29 (LALIVCTFTYLLVGAAVFDAL) traverse the membrane as a helical segment. Asparagine 53 carries N-linked (GlcNAc...) asparagine glycosylation. The pore-forming intramembrane region spans 78 to 101 (WRFAGSFYFAITVITTIGYGHAAP). Residues 108-128 (VFCMFYALLGIPLTLVMFQSL) form a helical membrane-spanning segment. The Cytoplasmic portion of the chain corresponds to 129-158 (GERINTFVRYLLHRAKRGLGMRHAEVSMAN). The helical transmembrane segment at 159-179 (MVLIGFVSCISTLCIGAAAFS) threads the bilayer. The pore-forming intramembrane region spans 184–207 (WTFFQAYYYCFITLTTIGFGDYVA). Residues 223–243 (FSFVYILTGLTVIGAFLNLVV) form a helical membrane-spanning segment. The Cytoplasmic segment spans residues 244–409 (LRFMTMNAED…RGLMKRRSSV (166 aa)).

The protein belongs to the two pore domain potassium channel (TC 1.A.1.8) family. Homodimer. Heterodimer with KCNK1. Heterodimer with KCNK9. In terms of tissue distribution, very strong expression in heart, also detected in kidney, brain, skin, testis, lung, skeletal muscle, small intestine and stomach. Not detected in liver, thymus or spleen. Expressed in adrenal glands mainly in zona glomerulosa and zona fasciculata of the cortex. Expressed at higher levels in brown and beige than in white adipocytes.

The protein resides in the cell membrane. The catalysed reaction is K(+)(in) = K(+)(out). It catalyses the reaction Na(+)(in) = Na(+)(out). Its activity is regulated as follows. Activated by halothane and isoflurane. Inhibited by external acidification, diacylglycerol and anandamide. Inactivated by barium. Functionally, k(+) channel that conducts voltage-dependent outward rectifying currents upon membrane depolarization. Voltage sensing is coupled to K(+) electrochemical gradient in an 'ion flux gating' mode where outward but not inward ion flow opens the gate. Changes ion selectivity and becomes permeable to Na(+) ions in response to extracellular acidification. Protonation of the pH sensor His-98 stabilizes C-type inactivation conformation likely converting the channel from outward K(+)-conducting, to inward Na(+)-conducting to nonconductive state. Homo- and heterodimerizes to form functional channels with distinct regulatory and gating properties. Allows K(+) currents with fast-gating kinetics important for the repolarization and hyperpolarization phases of action potentials. In cerebellar granule cells, heteromeric KCNK3:KCNK9 channel may hyperpolarize the resting membrane potential to limit intrinsic neuronal excitability, but once the action potential threshold is reached, it may support high-frequency action potential firing and increased neuronal excitability. Dispensable for central chemosensory respiration i.e. breathing controlled by brainstem CO2/pH, it rather conducts pH-sensitive currents and controls the firing rate of serotonergic raphe neurons involved in potentiation of the respiratory chemoreflex. Additionally, imparts chemosensitivity to type 1 cells in carotid bodies which respond to a decrease in arterial oxygen pressure or an increase in carbon dioxide pressure or pH to initiate adaptive changes in pulmonary ventilation. In adrenal gland, contributes to the maintenance of a hyperpolarized resting membrane potential of aldosterone-producing cells at zona glomerulosa and limits aldosterone release as part of a regulatory mechanism that controls arterial blood pressure and electrolyte homeostasis. In brown adipocytes, mediates K(+) efflux that counteracts norepinephrine-induced membrane depolarization, limits Ca(2+) efflux and downstream cAMP and PKA signaling, ultimately attenuating lipid oxidation and adaptive thermogenesis. The protein is Potassium channel subfamily K member 3 of Mus musculus (Mouse).